Here is a 574-residue protein sequence, read N- to C-terminus: Proline--tRNA ligase (574 aa).

It belongs to the class-II aminoacyl-tRNA synthetase family. ProS type 1 subfamily. In terms of assembly, homodimer.

It is found in the cytoplasm. The enzyme catalyses tRNA(Pro) + L-proline + ATP = L-prolyl-tRNA(Pro) + AMP + diphosphate. Its function is as follows. Catalyzes the attachment of proline to tRNA(Pro) in a two-step reaction: proline is first activated by ATP to form Pro-AMP and then transferred to the acceptor end of tRNA(Pro). As ProRS can inadvertently accommodate and process non-cognate amino acids such as alanine and cysteine, to avoid such errors it has two additional distinct editing activities against alanine. One activity is designated as 'pretransfer' editing and involves the tRNA(Pro)-independent hydrolysis of activated Ala-AMP. The other activity is designated 'posttransfer' editing and involves deacylation of mischarged Ala-tRNA(Pro). The misacylated Cys-tRNA(Pro) is not edited by ProRS. The polypeptide is Proline--tRNA ligase (Nitratidesulfovibrio vulgaris (strain ATCC 29579 / DSM 644 / CCUG 34227 / NCIMB 8303 / VKM B-1760 / Hildenborough) (Desulfovibrio vulgaris)).